Reading from the N-terminus, the 560-residue chain is uncharacterized protein (560 aa).

A DNA-binding region (zn(2)-C6 fungal-type) is located at residues Cys-18 to Cys-44. The tract at residues Leu-60–Leu-80 is disordered. Over residues Ile-64–Leu-80 the composition is skewed to basic and acidic residues. Residues Phe-182–Phe-202 traverse the membrane as a helical segment.

Its subcellular location is the nucleus membrane. This is an uncharacterized protein from Schizosaccharomyces pombe (strain 972 / ATCC 24843) (Fission yeast).